The primary structure comprises 2718 residues: E3 SUMO-protein ligase RanBP2 (2718 aa).

Positions 1 to 100 are sufficient for interaction with Hsp83; the sequence is MFTTRKEVDA…DPRQSEVVID (100 aa). Residues 1 to 200 are sufficient for interaction with piwi; the sequence is MFTTRKEVDA…EKMKIDQAFN (200 aa). 2 TPR repeats span residues 26 to 58 and 59 to 94; these read DIKG…VRDD and AVGH…DPRQ. 2 disordered regions span residues 796-816 and 937-959; these read QQDR…VHNN and EHQQ…HPVV. A compositionally biased stretch (polar residues) spans 803-816; the sequence is GIDNSFGSPDVHNN. Repeat unit 1 spans residues 808–809; it reads FG. The interval 808 to 2581 is 27 X 2 AA repeats of F-G; that stretch reads FGSPDVHNNS…GEENETKLFG (1774 aa). Low complexity predominate over residues 938–948; the sequence is HQQQQQHQQQQ. 3 tandem repeats follow at residues 1028–1029, 1035–1036, and 1104–1105. A disordered region spans residues 1181–1208; the sequence is QPVEKEPPANVVITSSDPLPKPTTASVQ. Over residues 1192 to 1208 the composition is skewed to polar residues; that stretch reads VITSSDPLPKPTTASVQ. Residues 1252–1253 form repeat 5; it reads FG. Disordered regions lie at residues 1263–1314 and 1483–1502; these read FKTQ…KPII and NKPQ…ATAA. Residues 1284–1299 show a composition bias toward polar residues; that stretch reads NQSGATDPNKTLPQDT. In terms of domain architecture, RanBD1 1 spans 1309 to 1445; the sequence is DFKPIIPLPD…FTKASEAAKS (137 aa). The segment covering 1483–1493 has biased composition (polar residues); that stretch reads NKPQEQTKTQP. 4 repeat units span residues 1506–1507, 1539–1540, 1547–1548, and 1552–1553. The RanBD1 2 domain occupies 1605–1742; sequence QFVPVIALPD…VQKAQQSIGN (138 aa). The interval 1738–1761 is disordered; it reads QSIGNEPKKEEVPSAAGEKEKPIK. Over residues 1743–1760 the composition is skewed to basic and acidic residues; it reads EPKKEEVPSAAGEKEKPI. Repeat 10 spans residues 1763–1764; that stretch reads FG. The segment at 1770 to 1799 adopts a RanBP2-type 1 zinc-finger fold; the sequence is KAGSWNCQACYTNNGQDQLYCLACQEPKDA. 4 repeat units span residues 1826–1827, 1842–1843, 1874–1875, and 1883–1884. The RanBP2-type 2 zinc finger occupies 1890–1919; that stretch reads AVGSWSCSACYVNNPGESLYCSACDAPKND. A run of 2 repeats spans residues 1942 to 1943 and 1944 to 1945. 3 disordered regions span residues 1981–2021, 2154–2204, and 2239–2273; these read FTFS…TYFS, EDSP…THEV, and SLSR…KDAG. Acidic residues predominate over residues 2002 to 2016; that stretch reads EDEDNDSQEVEEEEN. Positions 2019 to 2151 constitute a RanBD1 3 domain; it reads YFSPVIPLPD…IKNALNETAK (133 aa). Residues 2161-2175 are compositionally biased toward polar residues; it reads SVSQSTEANKPSQKN. Residues 2239–2257 show a composition bias toward low complexity; it reads SLSRNNSSASEASKTPSSA. 11 tandem repeats follow at residues 2260 to 2261, 2313 to 2314, 2332 to 2333, 2352 to 2353, 2360 to 2361, 2366 to 2367, 2393 to 2394, 2399 to 2400, 2415 to 2416, 2421 to 2422, and 2580 to 2581. The interval 2320–2346 is disordered; it reads AEQQKKDSSESVFGGNKADSQSPATQE. In terms of domain architecture, RanBD1 4 spans 2556–2699; it reads HYDAIVELPD…VNSCIKRAKA (144 aa).

This sequence belongs to the RanBP2 E3 ligase family. As to quaternary structure, part of the nuclear pore complex. Forms a complex with Nxt1, sbr/Nxf1 and RanGAP. Interacts (via TPR repeats) with Hsp83; the interaction is required for the nuclear import of the sesquiterpenoid juvenile hormone receptor Met. Interacts (via N-terminus) with piwi. Expressed in both oocytes and nurse cells (at protein level).

It localises to the nucleus. Its subcellular location is the nuclear pore complex. Its function is as follows. E3 SUMO-protein ligase. Component of the nuclear pore complex (NPC), a complex required for trafficking across the nuclear envelope. Required for nuclear import of nuclear localization signal (NLS)-containing proteins in an importin alpha/importin beta-dependent manner, but also for the nuclear import of specific proteins such as phosphorylated Mad or the sesquiterpenoid juvenile hormone receptor Met as part of the juvenile hormone signal transduction pathway. Plays a role in nuclear mRNA export by recruiting the mRNA transport complex composed of Nxt1 and sbr/Nxf1 to the NPC. Essential during germline development for transposon silencing and piRNA biogenesis probably by regulating piwi localization to the nucleus. During oogenesis, required to form granules that modulate the biogenesis of annulate lamellae containing nuclear pore complex components. The polypeptide is E3 SUMO-protein ligase RanBP2 (Drosophila melanogaster (Fruit fly)).